We begin with the raw amino-acid sequence, 222 residues long: UPF0173 metal-dependent hydrolase Kcr_0055 (222 aa).

Belongs to the UPF0173 family.

This is UPF0173 metal-dependent hydrolase Kcr_0055 from Korarchaeum cryptofilum (strain OPF8).